The following is a 278-amino-acid chain: MDVRQGIHSEHAKALDTAGLRRHFLVENVFAPDALSLTYSHIDRIIVGGAWPATRPVEVPASLGAEMGVSHLLARRELGAINIGGPGWVEVDGQRHAVGTEEAIYIGQGGQGVVFGSDDHARPAKFYLNCAPAHTAYPTRTITLAQASPETLGDAATSNRRTIYKFIVPDVLPTCQLSMGMTKLEPGSLWNTMPCHTHERRMEVYFYFNLAADAAVFHLLGEPGETRHVVVHNEQAVISPSWSIHSGVGTQAYTFIWGMAGENQVFKDMDHIAVADLR.

4 residues coordinate Zn(2+): His196, His198, Glu203, and His245.

It belongs to the KduI family. Zn(2+) is required as a cofactor.

The enzyme catalyses 5-dehydro-4-deoxy-D-glucuronate = 3-deoxy-D-glycero-2,5-hexodiulosonate. It participates in glycan metabolism; pectin degradation; 2-dehydro-3-deoxy-D-gluconate from pectin: step 4/5. Its function is as follows. Catalyzes the isomerization of 5-dehydro-4-deoxy-D-glucuronate to 3-deoxy-D-glycero-2,5-hexodiulosonate. This Burkholderia cenocepacia (strain ATCC BAA-245 / DSM 16553 / LMG 16656 / NCTC 13227 / J2315 / CF5610) (Burkholderia cepacia (strain J2315)) protein is 4-deoxy-L-threo-5-hexosulose-uronate ketol-isomerase.